A 475-amino-acid polypeptide reads, in one-letter code: UDP-N-acetylmuramate--L-alanine ligase (475 aa).

Gly119–Thr125 is an ATP binding site.

It belongs to the MurCDEF family.

The protein resides in the cytoplasm. It carries out the reaction UDP-N-acetyl-alpha-D-muramate + L-alanine + ATP = UDP-N-acetyl-alpha-D-muramoyl-L-alanine + ADP + phosphate + H(+). The protein operates within cell wall biogenesis; peptidoglycan biosynthesis. Cell wall formation. The polypeptide is UDP-N-acetylmuramate--L-alanine ligase (Wigglesworthia glossinidia brevipalpis).